The sequence spans 267 residues: Tryptophan 2,3-dioxygenase (267 aa).

Substrate is bound by residues 44–48 and R114; that span reads FITIH. H225 contributes to the heme binding site. Residue T239 participates in substrate binding.

This sequence belongs to the tryptophan 2,3-dioxygenase family. As to quaternary structure, homotetramer. Heme is required as a cofactor.

It carries out the reaction L-tryptophan + O2 = N-formyl-L-kynurenine. Its pathway is amino-acid degradation; L-tryptophan degradation via kynurenine pathway; L-kynurenine from L-tryptophan: step 1/2. Heme-dependent dioxygenase that catalyzes the oxidative cleavage of the L-tryptophan (L-Trp) pyrrole ring and converts L-tryptophan to N-formyl-L-kynurenine. Catalyzes the oxidative cleavage of the indole moiety. This chain is Tryptophan 2,3-dioxygenase, found in Nocardioides sp. (strain ATCC BAA-499 / JS614).